An 88-amino-acid polypeptide reads, in one-letter code: Sec-independent protein translocase protein TatA (88 aa).

A helical transmembrane segment spans residues 3–23 (IFGVGLPEVTVILILALLIFG). Residues 56–88 (MNEQDKDESPISIESNQTNEINQEKIDSENSKK) form a disordered region. Residues 67–76 (SIESNQTNEI) show a composition bias toward polar residues. Positions 77–88 (NQEKIDSENSKK) are enriched in basic and acidic residues.

This sequence belongs to the TatA/E family. In terms of assembly, forms a complex with TatC.

It is found in the cell inner membrane. Its function is as follows. Part of the twin-arginine translocation (Tat) system that transports large folded proteins containing a characteristic twin-arginine motif in their signal peptide across membranes. TatA could form the protein-conducting channel of the Tat system. This chain is Sec-independent protein translocase protein TatA, found in Prochlorococcus marinus (strain AS9601).